The chain runs to 172 residues: uncharacterized protein (172 aa).

One can recognise a PfpI endopeptidase domain in the interval 3–171; the sequence is KKVAIILSNE…FNREIVKQLQ (169 aa).

It belongs to the peptidase C56 family.

This is an uncharacterized protein from Staphylococcus haemolyticus (strain JCSC1435).